The chain runs to 488 residues: ATP synthase subunit beta (488 aa).

Position 164-171 (164-171) interacts with ATP; the sequence is GGAGVGKT.

This sequence belongs to the ATPase alpha/beta chains family. F-type ATPases have 2 components, CF(1) - the catalytic core - and CF(0) - the membrane proton channel. CF(1) has five subunits: alpha(3), beta(3), gamma(1), delta(1), epsilon(1). CF(0) has four main subunits: a(1), b(1), b'(1) and c(9-12).

The protein localises to the cellular thylakoid membrane. It catalyses the reaction ATP + H2O + 4 H(+)(in) = ADP + phosphate + 5 H(+)(out). In terms of biological role, produces ATP from ADP in the presence of a proton gradient across the membrane. The catalytic sites are hosted primarily by the beta subunits. The protein is ATP synthase subunit beta of Prochlorococcus marinus (strain SARG / CCMP1375 / SS120).